Reading from the N-terminus, the 176-residue chain is NAD(P)H-quinone oxidoreductase subunit 6, chloroplastic (176 aa).

5 helical membrane-spanning segments follow: residues 10-30 (FILVFLGLVLILGGLAVVLLP), 32-52 (PIYSAFSLGLVLVCISLLYIL), 61-81 (AQLLIYVGAINVLIIFAVMFL), 95-115 (VGDGVTSVVCTSLFASLITTI), and 152-172 (FLIPFELISIILLVALIGAIA).

This sequence belongs to the complex I subunit 6 family. As to quaternary structure, NDH is composed of at least 16 different subunits, 5 of which are encoded in the nucleus.

It localises to the plastid. The protein localises to the chloroplast thylakoid membrane. The catalysed reaction is a plastoquinone + NADH + (n+1) H(+)(in) = a plastoquinol + NAD(+) + n H(+)(out). It carries out the reaction a plastoquinone + NADPH + (n+1) H(+)(in) = a plastoquinol + NADP(+) + n H(+)(out). In terms of biological role, NDH shuttles electrons from NAD(P)H:plastoquinone, via FMN and iron-sulfur (Fe-S) centers, to quinones in the photosynthetic chain and possibly in a chloroplast respiratory chain. The immediate electron acceptor for the enzyme in this species is believed to be plastoquinone. Couples the redox reaction to proton translocation, and thus conserves the redox energy in a proton gradient. The polypeptide is NAD(P)H-quinone oxidoreductase subunit 6, chloroplastic (ndhG) (Trachelium caeruleum (Blue throatwort)).